Here is a 217-residue protein sequence, read N- to C-terminus: Small ribosomal subunit protein uS3c (217 aa).

The 75-residue stretch at Ile-43–Ala-117 folds into the KH type-2 domain.

The protein belongs to the universal ribosomal protein uS3 family. Part of the 30S ribosomal subunit.

The protein resides in the plastid. It localises to the chloroplast. This Ranunculus macranthus (Large buttercup) protein is Small ribosomal subunit protein uS3c (rps3).